Consider the following 329-residue polypeptide: Segregation and condensation protein B (329 aa).

3 disordered regions span residues 1–39 (MTTG…GPAD), 252–274 (IVEK…SDPA), and 286–329 (SEAA…PKPE).

Belongs to the ScpB family. Homodimer. Homodimerization may be required to stabilize the binding of ScpA to the Smc head domains. Component of the Structural Maintenance of Chromosome (SMC) condensin-like complex composed of ScpA, ScpB and the Smc homodimer. ScpA and ScpB bind to the head domain of Smc, the presence of the three proteins is required for the association of the complex with DNA.

The protein localises to the cytoplasm. A conditionally essential component of the chromosome segregation machinery. Required for chromosome condensation and partitioning. Important for positioning and anchoring of ParB-parS complexes (ori of replication) in the subpolar region, and of the ter replication site, as well as for segration of the ParB-parS complex and thus chromosome segregation. Probably acts via the formation of a condensin-like complex containing Smc, ScpA and ScpB that pulls DNA away from mid-cell into both cell halves. This chain is Segregation and condensation protein B, found in Myxococcus xanthus (strain DK1622).